The sequence spans 181 residues: ATP-dependent protease subunit HslV (181 aa).

Thr7 is an active-site residue. The Na(+) site is built by Ala162, Cys165, and Thr168.

It belongs to the peptidase T1B family. HslV subfamily. In terms of assembly, a double ring-shaped homohexamer of HslV is capped on each side by a ring-shaped HslU homohexamer. The assembly of the HslU/HslV complex is dependent on binding of ATP.

It localises to the cytoplasm. It carries out the reaction ATP-dependent cleavage of peptide bonds with broad specificity.. Allosterically activated by HslU binding. In terms of biological role, protease subunit of a proteasome-like degradation complex believed to be a general protein degrading machinery. This Coxiella burnetii (strain RSA 331 / Henzerling II) protein is ATP-dependent protease subunit HslV.